The sequence spans 402 residues: Plasminogen activator inhibitor 1 (402 aa).

The first 23 residues, 1–23 (MQMSPALTCLVLGLALVFGEGSA), serve as a signal peptide directing secretion. 3 N-linked (GlcNAc...) asparagine glycosylation sites follow: N232, N288, and N352.

The protein belongs to the serpin family. Forms a heterodimer with TMPRSS7. Interacts with VTN. Binds LRP1B; binding is followed by internalization and degradation. Interacts with PPP1CB. In complex with PLAU/uPA, interacts with PLAUR/uPAR. Interacts with SORL1 and LRP1, either alone or in complex with PLAU; these interactions are abolished in the presence of LRPAP1/RAP. The ternary complex composed of PLAUR-PLAU-PAI1 also interacts with SORL1. Interacts with PLAT/tPA. Also interacts with SORL1, when complexed to PLAT/tPA. In terms of processing, inactivated by proteolytic attack of the urokinase-type (u-PA) and the tissue-type (TPA), cleaving the 369-Arg-|-Met-370 bond. In terms of tissue distribution, expressed in endothelial cells. Found in plasma, platelets, and hepatoma and fibrosarcoma cells.

It localises to the secreted. In terms of biological role, serine protease inhibitor. Inhibits TMPRSS7. Is a primary inhibitor of tissue-type plasminogen activator (PLAT) and urokinase-type plasminogen activator (PLAU). As PLAT inhibitor, it is required for fibrinolysis down-regulation and is responsible for the controlled degradation of blood clots. As PLAU inhibitor, it is involved in the regulation of cell adhesion and spreading. Acts as a regulator of cell migration, independently of its role as protease inhibitor. It is required for stimulation of keratinocyte migration during cutaneous injury repair. It is involved in cellular and replicative senescence. Plays a role in alveolar type 2 cells senescence in the lung. Is involved in the regulation of cementogenic differentiation of periodontal ligament stem cells, and regulates odontoblast differentiation and dentin formation during odontogenesis. This chain is Plasminogen activator inhibitor 1 (SERPINE1), found in Homo sapiens (Human).